Reading from the N-terminus, the 435-residue chain is DMATS-type prenyltransferase fscG (435 aa).

Arginine 111, lysine 193, tyrosine 195, arginine 259, lysine 261, tyrosine 263, tyrosine 352, and tyrosine 423 together coordinate dimethylallyl diphosphate.

The protein belongs to the tryptophan dimethylallyltransferase family.

It participates in secondary metabolite biosynthesis. Functionally, DMATS-type prenyltransferase; part of the fragmented gene cluster that mediates the biosynthesis of fusarochromene, a tryptophan-derived metabolite closely related to a group of mycotoxins including fusarochromanone. Within the pathway, fscG catalyzes the prenylation of the primary alcohol produced by fscA which is necessary for the formation of the chromene ring by the oxidoreductase fscI. The first step of the pathway is the epimerization of L-tryptophan to D-tryptophan in the presence of the NRPS-like tryptophan epimerase fscC. D-tryptophan is subsequently hydroxylated by the tryptophan 6-hydroxylase fscE to yield 6-hydroxytryptophan. The pyrrole ring undergoes cleavaged by the tryptophan 2,3-dioxygenase fscD and is finally converted to 4-hydroxykyrunenine by the hydrolase fscH. The NRPS-like oxidoreductase fscA reduces the carboxyl group to primary alcohol and the DMATS-type prenyltransferase fscG performs prenylation, followed by the formation of a chromene ring catalyzed by the oxidoreductase fscI, which leads to desacetylfusarochromene. Epoxidation by fscF and rearrangement reactions of chromene double bonds convert compound desacetylfusarochromene to fusarochromanones. Although specific acetyltransferases were not found near the fsc gene cluster, several predicted enzymes containing the N-acetyltransferase superfamily domain are present in the genome of F.equiseti. These predicted enzymes may have the potential to convert desacetylfusarochromene to fusarochromene. The chain is DMATS-type prenyltransferase fscG from Fusarium equiseti (Fusarium scirpi).